The sequence spans 249 residues: Protein LicA homolog (249 aa).

This sequence belongs to the peptidase S49 family.

The sequence is that of Protein LicA homolog (licA) from Metamycoplasma hominis (strain ATCC 23114 / DSM 25592 / NBRC 14850 / NCTC 10111 / PG21) (Mycoplasma hominis).